A 359-amino-acid chain; its full sequence is MRQILIAVAIALTVSILLTPALIRLFTRQGFGHHTREDGPPTHHAKRGTPSMGGVAIIAGIWAGYLGTHLAGLAFDGEGISASGLLVLSLATVLGIVGFLDDLIKIRRSRNLGLNKTAKTIGQVAAAVLFGVLALGFRNANGLTPASADLSYVREIATVTLAPGLFVLFCVVVVSAWSNAVNFTDGLDGLAAGSMAMVTAAYVLITFWQYRNACVTAPGLGCYNVRDPLDLAIVAAATAGACIGFLWWNAAPAKIFMGDTGSLALGGIIAGISVTSRTEILAVVLGSLFVAEVSSVVLQILTFRTTGRRVFRMAPFHHHFELAGWAETTVIIRFWLLTAIACGLGVALFYGEWLAAIGA.

10 helical membrane passes run 3 to 23 (QILI…PALI), 55 to 75 (VAII…GLAF), 80 to 100 (ISAS…VGFL), 117 to 137 (TAKT…ALGF), 156 to 176 (IATV…VVSA), 187 to 207 (LDGL…LITF), 231 to 251 (LAIV…WNAA), 255 to 275 (IFMG…ISVT), 280 to 300 (ILAV…VLQI), and 334 to 354 (FWLL…GEWL).

It belongs to the glycosyltransferase 4 family. MraY subfamily. Mg(2+) is required as a cofactor.

It is found in the cell membrane. It carries out the reaction UDP-N-acetyl-alpha-D-muramoyl-L-alanyl-gamma-D-glutamyl-meso-2,6-diaminopimeloyl-D-alanyl-D-alanine + di-trans,octa-cis-undecaprenyl phosphate = di-trans,octa-cis-undecaprenyl diphospho-N-acetyl-alpha-D-muramoyl-L-alanyl-D-glutamyl-meso-2,6-diaminopimeloyl-D-alanyl-D-alanine + UMP. Its pathway is cell wall biogenesis; peptidoglycan biosynthesis. Functionally, catalyzes the initial step of the lipid cycle reactions in the biosynthesis of the cell wall peptidoglycan: transfers peptidoglycan precursor phospho-MurNAc-pentapeptide from UDP-MurNAc-pentapeptide onto the lipid carrier undecaprenyl phosphate, yielding undecaprenyl-pyrophosphoryl-MurNAc-pentapeptide, known as lipid I. This Mycobacterium avium (strain 104) protein is Phospho-N-acetylmuramoyl-pentapeptide-transferase.